The chain runs to 502 residues: Glutamate dehydrogenase, mitochondrial (502 aa).

Residue 96 to 98 (HHR) coordinates NAD(+). 2 residues coordinate substrate: Lys102 and Lys126. Asp131 lines the NAD(+) pocket. Lys138 is an active-site residue. Ser394 lines the substrate pocket.

This sequence belongs to the Glu/Leu/Phe/Val dehydrogenases family. As to quaternary structure, homohexamer.

It localises to the mitochondrion matrix. The enzyme catalyses L-glutamate + NAD(+) + H2O = 2-oxoglutarate + NH4(+) + NADH + H(+). The catalysed reaction is L-glutamate + NADP(+) + H2O = 2-oxoglutarate + NH4(+) + NADPH + H(+). Subject to allosteric regulation. Activated by AMP and ADP. This is Glutamate dehydrogenase, mitochondrial (gluD) from Dictyostelium discoideum (Social amoeba).